The sequence spans 105 residues: Phosphoribosyl-ATP pyrophosphatase (105 aa).

It belongs to the PRA-PH family.

It localises to the cytoplasm. It carries out the reaction 1-(5-phospho-beta-D-ribosyl)-ATP + H2O = 1-(5-phospho-beta-D-ribosyl)-5'-AMP + diphosphate + H(+). The protein operates within amino-acid biosynthesis; L-histidine biosynthesis; L-histidine from 5-phospho-alpha-D-ribose 1-diphosphate: step 2/9. This is Phosphoribosyl-ATP pyrophosphatase from Roseobacter denitrificans (strain ATCC 33942 / OCh 114) (Erythrobacter sp. (strain OCh 114)).